Consider the following 73-residue polypeptide: Putative antimicrobial peptide clone 5 (73 aa).

The N-terminal stretch at Met-1–Ala-22 is a signal peptide. Residues Glu-45–Tyr-73 constitute a propeptide that is removed on maturation.

Belongs to the non-disulfide-bridged peptide (NDBP) superfamily. Short antimicrobial peptide (group 4) family. Expressed by the venom gland.

It is found in the secreted. In terms of biological role, antibacterial peptide. The chain is Putative antimicrobial peptide clone 5 from Tityus costatus (Brazilian scorpion).